The primary structure comprises 231 residues: Orotate phosphoribosyltransferase (231 aa).

Residues lysine 27, 79 to 80 (YK), arginine 106, lysine 107, lysine 110, histidine 112, and 133 to 141 (DDVMTAGTA) each bind 5-phospho-alpha-D-ribose 1-diphosphate. Positions 137 and 166 each coordinate orotate.

The protein belongs to the purine/pyrimidine phosphoribosyltransferase family. PyrE subfamily. Homodimer. Mg(2+) is required as a cofactor.

It carries out the reaction orotidine 5'-phosphate + diphosphate = orotate + 5-phospho-alpha-D-ribose 1-diphosphate. It functions in the pathway pyrimidine metabolism; UMP biosynthesis via de novo pathway; UMP from orotate: step 1/2. In terms of biological role, catalyzes the transfer of a ribosyl phosphate group from 5-phosphoribose 1-diphosphate to orotate, leading to the formation of orotidine monophosphate (OMP). In Bifidobacterium animalis subsp. lactis (strain AD011), this protein is Orotate phosphoribosyltransferase.